The following is a 666-amino-acid chain: MRKINLLDLETTNKIAAGEVIERPFSVVKELVENSIDAGAKNITIEIEDGGQKLIKIIDDGEGIYPIDIKNAFLPHATSKINSIEDIYKISTMGFRGEALASISSVSKTKLKSRVDSYNFGKEIYIEGGKIEYLKDTGCNVGTTIEVSDLFYNVPARLKFLKSARSDSSSISDIVNRFILAHPDISFNLINKGKQSIKSYGTGNLKDSIRCVYNKTISENLINFESHKDIISVYGFIGKPEISRKSRTNQSIFVNKRYVKSKFITAAVENAFKSFLTVNSYPFFVIFIDIFPEYIDVNVHPTKSEVKFKDERAMFKTIFDAVHGAIKGELKESFTNFFNKEDINIYDSEKSITEPIKLEKEEVQIPIDLNSNNKIDIFGNNINKLSNNTELLKNIGIKEKNTLENNNDFYTSKQNEIYYANKNDECLNSCNKDNYSKIEKSLQKDNKNPDTLYLNEHNTNSSSINIKENKPNNFYVDMKIIGQFNNTYILIEKDKELYIIDQHAAHEKVLFEKFKSEIENRYVISQILLSPVVIELSEDEFNIYEENKDIFKNSGFSVETFGEYTINIKEVPLILGKPNVENLFMDILYNLKNMKSKETSTIKYNAIATLACKSAVKANDNLKEEEIKKLIEDMLILNNPYTCPHGRPTMIKFTLKDLEKKFKRIQ.

This sequence belongs to the DNA mismatch repair MutL/HexB family.

Functionally, this protein is involved in the repair of mismatches in DNA. It is required for dam-dependent methyl-directed DNA mismatch repair. May act as a 'molecular matchmaker', a protein that promotes the formation of a stable complex between two or more DNA-binding proteins in an ATP-dependent manner without itself being part of a final effector complex. The chain is DNA mismatch repair protein MutL from Clostridium botulinum (strain Langeland / NCTC 10281 / Type F).